The following is a 220-amino-acid chain: Protein-methionine-sulfoxide reductase heme-binding subunit MsrQ (220 aa).

Transmembrane regions (helical) follow at residues 20–40 (LWLL…LGAT), 52–72 (EHLL…VTPI), 86–106 (ALGL…MVLD), 122–142 (PFIT…LTSN), 153–173 (WSSL…HFLM), and 175–195 (VKSW…LLLW).

Belongs to the MsrQ family. Heterodimer of a catalytic subunit (MsrP) and a heme-binding subunit (MsrQ). Requires FMN as cofactor. The cofactor is heme b.

It is found in the cell inner membrane. Part of the MsrPQ system that repairs oxidized periplasmic proteins containing methionine sulfoxide residues (Met-O), using respiratory chain electrons. Thus protects these proteins from oxidative-stress damage caused by reactive species of oxygen and chlorine generated by the host defense mechanisms. MsrPQ is essential for the maintenance of envelope integrity under bleach stress, rescuing a wide series of structurally unrelated periplasmic proteins from methionine oxidation. MsrQ provides electrons for reduction to the reductase catalytic subunit MsrP, using the quinone pool of the respiratory chain. The sequence is that of Protein-methionine-sulfoxide reductase heme-binding subunit MsrQ from Brucella abortus (strain S19).